We begin with the raw amino-acid sequence, 637 residues long: ATP-dependent zinc metalloprotease FtsH (637 aa).

The Cytoplasmic segment spans residues 1 to 6; sequence MNNQGR. A helical transmembrane segment spans residues 7–27; sequence SILAWAALFIFVILLFNVFQS. Residues 28-103 are Periplasmic-facing; that stretch reads DGLLGVRNNI…VVPLETRMNT (76 aa). Residues 104 to 124 traverse the membrane as a helical segment; it reads FLGFLISWFPMLLLIGVWVFF. Residues 125-637 are Cytoplasmic-facing; sequence MRQMHGGGKA…TKDKKENIIS (513 aa). 195 to 202 contributes to the ATP binding site; the sequence is GPPGTGKT. Residue histidine 417 coordinates Zn(2+). Glutamate 418 is an active-site residue. Zn(2+)-binding residues include histidine 421 and aspartate 495.

It in the central section; belongs to the AAA ATPase family. The protein in the C-terminal section; belongs to the peptidase M41 family. Homohexamer. Zn(2+) serves as cofactor.

The protein resides in the cell inner membrane. Its function is as follows. Acts as a processive, ATP-dependent zinc metallopeptidase for both cytoplasmic and membrane proteins. Plays a role in the quality control of integral membrane proteins. The polypeptide is ATP-dependent zinc metalloprotease FtsH (Rickettsia prowazekii (strain Madrid E)).